Here is a 276-residue protein sequence, read N- to C-terminus: F420-dependent methylenetetrahydromethanopterin dehydrogenase (276 aa).

Residues 253-276 (TVLRTPHGKEGKTLSKKDLLAKPE) form a disordered region. Positions 259 to 276 (HGKEGKTLSKKDLLAKPE) are enriched in basic and acidic residues.

This sequence belongs to the MTD family. Found to be tightly associated with methyl-coenzyme M methylreductase.

It carries out the reaction 5,10-methylenetetrahydromethanopterin + oxidized coenzyme F420-(gamma-L-Glu)(n) + 2 H(+) = 5,10-methenyl-5,6,7,8-tetrahydromethanopterin + reduced coenzyme F420-(gamma-L-Glu)(n). It participates in one-carbon metabolism; methanogenesis from CO(2); 5,10-methylene-5,6,7,8-tetrahydromethanopterin from 5,10-methenyl-5,6,7,8-tetrahydromethanopterin (coenzyme F420 route): step 1/1. With respect to regulation, activity requires salt; 100 mM sodium or potassium salts of chloride, phosphate or sulfate are equally effective. Not inactivated by O(2). Inhibited by hydrogen-producing 5,10-methenyltetrahydromethanopterin hydrogenase which has a higher affinity for their shared substrate. Enzyme is O(2)-stable and strictly dependent on coenzyme F420. Catalyzes the reversible reduction of methenyl-H(4)MPT(+) to methylene-H(4)MPT. This chain is F420-dependent methylenetetrahydromethanopterin dehydrogenase, found in Methanothermobacter marburgensis (strain ATCC BAA-927 / DSM 2133 / JCM 14651 / NBRC 100331 / OCM 82 / Marburg) (Methanobacterium thermoautotrophicum).